The following is a 154-amino-acid chain: UPF0756 membrane protein BLi03063/BL00400 (154 aa).

4 consecutive transmembrane segments (helical) span residues 8-28 (FLIL…IIAV), 54-74 (WGVT…EIGF), 87-107 (WIAL…ITLL), and 117-137 (LVFG…GPLI).

Belongs to the UPF0756 family.

It localises to the cell membrane. The sequence is that of UPF0756 membrane protein BLi03063/BL00400 from Bacillus licheniformis (strain ATCC 14580 / DSM 13 / JCM 2505 / CCUG 7422 / NBRC 12200 / NCIMB 9375 / NCTC 10341 / NRRL NRS-1264 / Gibson 46).